A 378-amino-acid polypeptide reads, in one-letter code: Ret finger protein-like 2 (378 aa).

An RING-type; degenerate zinc finger spans residues 101-143 (CPVCSDYLEKPMSLECGCAVCLKCINSLQKEPHGEDLLCCCSS). Residues 168-362 (EPKLKKILQM…DQGVLSICPL (195 aa)) enclose the B30.2/SPRY domain.

In terms of tissue distribution, seems to be expressed in prostate and less abundantly in adult brain, fetal liver, and fetal kidney.

The protein is Ret finger protein-like 2 (RFPL2) of Homo sapiens (Human).